The primary structure comprises 424 residues: Endoglucanase (424 aa).

An N-terminal signal peptide occupies residues 1–19 (MHRCMPLVAASMAALMLAG). C20 is lipidated: N-palmitoyl cysteine. The S-diacylglycerol cysteine moiety is linked to residue C20. Positions 20–43 (CGGGDGDTTLSTAAATDTTTLKTA) are excised as a propeptide. E247 serves as the catalytic Proton donor. The active-site Nucleophile is the E359.

The protein belongs to the glycosyl hydrolase 5 (cellulase A) family.

The protein localises to the cell membrane. The enzyme catalyses Endohydrolysis of (1-&gt;4)-beta-D-glucosidic linkages in cellulose, lichenin and cereal beta-D-glucans.. The protein is Endoglucanase (egl) of Ralstonia nicotianae (strain ATCC BAA-1114 / GMI1000) (Ralstonia solanacearum).